We begin with the raw amino-acid sequence, 192 residues long: A-type ATP synthase subunit E (192 aa).

A disordered region spans residues 1-66 (MSLDTVVEDI…QERDQKLSSA (66 aa)). The segment covering 8–26 (EDIRDEARARADEIRSEGE) has biased composition (basic and acidic residues). Over residues 27–49 (ERAEEIIDEAEREADDIVDEAER) the composition is skewed to acidic residues. Residues 50-66 (EAERKISQERDQKLSSA) are compositionally biased toward basic and acidic residues.

This sequence belongs to the V-ATPase E subunit family. Has multiple subunits with at least A(3), B(3), C, D, E, F, H, I and proteolipid K(x).

It is found in the cell membrane. Component of the A-type ATP synthase that produces ATP from ADP in the presence of a proton gradient across the membrane. This is A-type ATP synthase subunit E from Natronomonas pharaonis (strain ATCC 35678 / DSM 2160 / CIP 103997 / JCM 8858 / NBRC 14720 / NCIMB 2260 / Gabara) (Halobacterium pharaonis).